The chain runs to 384 residues: DNA dC-&gt;dU-editing enzyme APOBEC-3G (384 aa).

An essential for cytoplasmic localization region spans residues Met1 to Ser60. One can recognise a CMP/dCMP-type deaminase 1 domain in the interval Arg29–Leu138. Position 32 is a phosphothreonine; by PKA (Thr32). (Microbial infection) Glycyl lysine isopeptide (Lys-Gly) (interchain with G-Cter in ubiquitin) cross-links involve residues Lys42, Lys52, and Lys63. Zn(2+) is bound by residues His65, Cys97, and Cys100. (Microbial infection) Glycyl lysine isopeptide (Lys-Gly) (interchain with G-Cter in ubiquitin) cross-links involve residues Lys150 and Lys163. The interval Glu209 to Ser336 is necessary for homooligomerization. Residues Arg213–Arg215 are interaction with DNA. The 115-residue stretch at Gly214–Leu328 folds into the CMP/dCMP-type deaminase 2 domain. Thr218 carries the phosphothreonine; by PKA and CAMK2 modification. Lys249 is covalently cross-linked ((Microbial infection) Glycyl lysine isopeptide (Lys-Gly) (interchain with G-Cter in ubiquitin)). A Zn(2+)-binding site is contributed by His257. Residue Glu259 is the Proton donor of the active site. Lys270 is covalently cross-linked ((Microbial infection) Glycyl lysine isopeptide (Lys-Gly) (interchain with G-Cter in ubiquitin)). 2 residues coordinate Zn(2+): Cys288 and Cys291. (Microbial infection) Glycyl lysine isopeptide (Lys-Gly) (interchain with G-Cter in ubiquitin) cross-links involve residues Lys297, Lys301, and Lys303. Residues Arg313 to Arg320 form an interaction with DNA region. Lys334 is covalently cross-linked ((Microbial infection) Glycyl lysine isopeptide (Lys-Gly) (interchain with G-Cter in ubiquitin)).

The protein belongs to the cytidine and deoxycytidylate deaminase family. As to quaternary structure, homodimer. Homooligomer. Can bind RNA to form ribonucleoprotein complexes of high-molecular-mass (HMM) or low-molecular-mass (LMM). HMM is inactive and heterogeneous in protein composition because of binding nonselectively to cellular RNAs, which in turn are associated with variety of cellular proteins. The LMM form which is enzymatically active has few or no RNAs associated. Its ability to form homooligomer is distinct from its ability to assemble into HMM. Interacts with APOBEC3B, APOBEC3F, MOV10, AGO2, EIF4E, EIF4ENIF1, DCP2 and DDX6 in an RNA-dependent manner. Interacts with AGO1, AGO3 and PKA/PRKACA. (Microbial infection) Interacts with HIV-1 Vif; promoting its ubiquitination by a cullin-5-RING E3 ubiquitin-protein ligase complex (ECS complex) hijacked by the HIV-1 Vif. In terms of assembly, (Microbial infection) Interacts with HIV-1 reverse transcriptase/ribonuclease H. As to quaternary structure, (Microbial infection) Interacts with hepatitis B virus capsid protein. The cofactor is Zn(2+). In terms of processing, (Microbial infection) Following infection by HIV-1, ubiquitinated by a cullin-5-RING E3 ubiquitin-protein ligase complex (ECS complex) hijacked by the HIV-1 Vif protein, leading to its degradation. Deubiquitinated by USP49; leading to stabilization. Post-translationally, phosphorylation at Thr-32 reduces its binding to HIV-1 Vif and subsequent ubiquitination and degradation thus promoting its antiviral activity. As to expression, expressed in spleen, testes, ovary and peripheral blood leukocytes and CD4+ lymphocytes. Also expressed in non-permissive peripheral blood mononuclear cells, and several tumor cell lines; no expression detected in permissive lymphoid and non-lymphoid cell lines. Exists only in the LMM form in peripheral blood-derived resting CD4 T-cells and monocytes, both of which are refractory to HIV-1 infection. LMM is converted to a HMM complex when resting CD4 T-cells are activated or when monocytes are induced to differentiate into macrophages. This change correlates with increased susceptibility of these cells to HIV-1 infection.

The protein localises to the cytoplasm. It is found in the nucleus. It localises to the P-body. The catalysed reaction is a 2'-deoxycytidine in single-stranded DNA + H2O + H(+) = a 2'-deoxyuridine in single-stranded DNA + NH4(+). (Microbial infection) Antiviral activity is neutralized by the HIV-1 virion infectivity factor (Vif), that prevents its incorporation into progeny virions by both inhibiting its translation and/or by inducing its ubiquitination and subsequent degradation by the 26S proteasome. Can also be neutralized by simian immunodeficiency virus sooty mangabey monkey virus (SIV-sm) and chimpanzee immunodeficiency virus (SIV-cpz) Vif. DNA deaminase (cytidine deaminase) which acts as an inhibitor of retrovirus replication and retrotransposon mobility via deaminase-dependent and -independent mechanisms. Exhibits potent antiviral activity against Vif-deficient HIV-1. After the penetration of retroviral nucleocapsids into target cells of infection and the initiation of reverse transcription, it can induce the conversion of cytosine to uracil in the minus-sense single-strand viral DNA, leading to G-to-A hypermutations in the subsequent plus-strand viral DNA. The resultant detrimental levels of mutations in the proviral genome, along with a deamination-independent mechanism that works prior to the proviral integration, together exert efficient antiretroviral effects in infected target cells. Selectively targets single-stranded DNA and does not deaminate double-stranded DNA or single- or double-stranded RNA. Exhibits antiviral activity also against simian immunodeficiency viruses (SIVs), hepatitis B virus (HBV), equine infectious anemia virus (EIAV), xenotropic MuLV-related virus (XMRV) and simian foamy virus (SFV). May inhibit the mobility of LTR and non-LTR retrotransposons. The chain is DNA dC-&gt;dU-editing enzyme APOBEC-3G from Homo sapiens (Human).